The sequence spans 724 residues: Catalase-peroxidase (724 aa).

The segment at 1-26 is disordered; that stretch reads MDENKTKPTGKCPVMHGGNTSTGSSN. The tryptophyl-tyrosyl-methioninium (Trp-Tyr) (with M-251) cross-link spans 98–225; sequence WHSAGSYRTT…LAAVQMGLIY (128 aa). Catalysis depends on histidine 99, which acts as the Proton acceptor. Residues 225–251 constitute a cross-link (tryptophyl-tyrosyl-methioninium (Tyr-Met) (with W-98)); that stretch reads YVNPEGVDGKSDPLRTAQDMRVTFSRM. Position 266 (histidine 266) interacts with heme b.

This sequence belongs to the peroxidase family. Peroxidase/catalase subfamily. Homodimer or homotetramer. Heme b serves as cofactor. Formation of the three residue Trp-Tyr-Met cross-link is important for the catalase, but not the peroxidase activity of the enzyme.

It catalyses the reaction H2O2 + AH2 = A + 2 H2O. The enzyme catalyses 2 H2O2 = O2 + 2 H2O. Bifunctional enzyme with both catalase and broad-spectrum peroxidase activity. The chain is Catalase-peroxidase from Pectobacterium atrosepticum (strain SCRI 1043 / ATCC BAA-672) (Erwinia carotovora subsp. atroseptica).